The sequence spans 334 residues: Large ribosomal subunit protein uL3 (334 aa).

Residues 1–10 (MGMKKNRPRR) are compositionally biased toward basic residues. Residues 1 to 21 (MGMKKNRPRRGSLAFSPRKRA) are disordered.

The protein belongs to the universal ribosomal protein uL3 family. Part of the 50S ribosomal subunit. Forms a cluster with proteins L14 and L24e.

Its function is as follows. One of the primary rRNA binding proteins, it binds directly near the 3'-end of the 23S rRNA, where it nucleates assembly of the 50S subunit. The polypeptide is Large ribosomal subunit protein uL3 (Methanococcus vannielii (strain ATCC 35089 / DSM 1224 / JCM 13029 / OCM 148 / SB)).